We begin with the raw amino-acid sequence, 403 residues long: Imidazolonepropionase (403 aa).

Histidine 74 and histidine 76 together coordinate Fe(3+). Zn(2+) is bound by residues histidine 74 and histidine 76. 4-imidazolone-5-propanoate is bound by residues arginine 83, tyrosine 146, and histidine 179. Tyrosine 146 serves as a coordination point for N-formimidoyl-L-glutamate. Fe(3+) is bound at residue histidine 242. Histidine 242 contributes to the Zn(2+) binding site. Glutamine 245 provides a ligand contact to 4-imidazolone-5-propanoate. Aspartate 317 lines the Fe(3+) pocket. Residue aspartate 317 coordinates Zn(2+). N-formimidoyl-L-glutamate is bound by residues asparagine 319 and glycine 321. Threonine 322 contributes to the 4-imidazolone-5-propanoate binding site.

It belongs to the metallo-dependent hydrolases superfamily. HutI family. Zn(2+) serves as cofactor. It depends on Fe(3+) as a cofactor.

The protein resides in the cytoplasm. The catalysed reaction is 4-imidazolone-5-propanoate + H2O = N-formimidoyl-L-glutamate. It functions in the pathway amino-acid degradation; L-histidine degradation into L-glutamate; N-formimidoyl-L-glutamate from L-histidine: step 3/3. Its function is as follows. Catalyzes the hydrolytic cleavage of the carbon-nitrogen bond in imidazolone-5-propanoate to yield N-formimidoyl-L-glutamate. It is the third step in the universal histidine degradation pathway. This Sphingopyxis alaskensis (strain DSM 13593 / LMG 18877 / RB2256) (Sphingomonas alaskensis) protein is Imidazolonepropionase.